The following is a 321-amino-acid chain: Ribosomal RNA small subunit methyltransferase H (321 aa).

S-adenosyl-L-methionine is bound by residues 34-36, D54, F80, D102, and Q109; that span reads GGH.

This sequence belongs to the methyltransferase superfamily. RsmH family.

The protein localises to the cytoplasm. It carries out the reaction cytidine(1402) in 16S rRNA + S-adenosyl-L-methionine = N(4)-methylcytidine(1402) in 16S rRNA + S-adenosyl-L-homocysteine + H(+). Specifically methylates the N4 position of cytidine in position 1402 (C1402) of 16S rRNA. In Blochmanniella floridana, this protein is Ribosomal RNA small subunit methyltransferase H.